Reading from the N-terminus, the 330-residue chain is tRNA U34 carboxymethyltransferase (330 aa).

Carboxy-S-adenosyl-L-methionine is bound by residues K91, W105, K110, G130, 152-154 (DPS), 181-182 (IE), M196, Y200, and R315.

It belongs to the class I-like SAM-binding methyltransferase superfamily. CmoB family. Homotetramer.

It catalyses the reaction carboxy-S-adenosyl-L-methionine + 5-hydroxyuridine(34) in tRNA = 5-carboxymethoxyuridine(34) in tRNA + S-adenosyl-L-homocysteine + H(+). Its function is as follows. Catalyzes carboxymethyl transfer from carboxy-S-adenosyl-L-methionine (Cx-SAM) to 5-hydroxyuridine (ho5U) to form 5-carboxymethoxyuridine (cmo5U) at position 34 in tRNAs. The protein is tRNA U34 carboxymethyltransferase of Shewanella oneidensis (strain ATCC 700550 / JCM 31522 / CIP 106686 / LMG 19005 / NCIMB 14063 / MR-1).